The sequence spans 324 residues: Phospho-N-acetylmuramoyl-pentapeptide-transferase (324 aa).

10 helical membrane-spanning segments follow: residues 9-29 (TFAVAFIITVIGVPLFIPFLV), 53-73 (TMGAVVFITAMLISFLVFSFI), 77-97 (VSAATWLLFIALALFGALGFL), 117-137 (FLGQVVISILFYLVYHFNDFA), 147-167 (IEVDLGWFFVIFILFWLVGFS), 176-196 (LDGLVSGLSVIAFSAFGVIAF), 201-221 (MDVAIFCFAIVGGMLGFLLFN), 227-247 (IFMGDTGSLALGGSIAAISIL), 253-273 (LLLLIGIIFVIETASVILQVF), and 304-324 (VLTFWGIGLVGAIISVCVVIF).

It belongs to the glycosyltransferase 4 family. MraY subfamily. Mg(2+) is required as a cofactor.

The protein localises to the cell membrane. The enzyme catalyses UDP-N-acetyl-alpha-D-muramoyl-L-alanyl-gamma-D-glutamyl-meso-2,6-diaminopimeloyl-D-alanyl-D-alanine + di-trans,octa-cis-undecaprenyl phosphate = di-trans,octa-cis-undecaprenyl diphospho-N-acetyl-alpha-D-muramoyl-L-alanyl-D-glutamyl-meso-2,6-diaminopimeloyl-D-alanyl-D-alanine + UMP. It participates in cell wall biogenesis; peptidoglycan biosynthesis. Catalyzes the initial step of the lipid cycle reactions in the biosynthesis of the cell wall peptidoglycan: transfers peptidoglycan precursor phospho-MurNAc-pentapeptide from UDP-MurNAc-pentapeptide onto the lipid carrier undecaprenyl phosphate, yielding undecaprenyl-pyrophosphoryl-MurNAc-pentapeptide, known as lipid I. In Listeria monocytogenes serovar 1/2a (strain ATCC BAA-679 / EGD-e), this protein is Phospho-N-acetylmuramoyl-pentapeptide-transferase.